A 203-amino-acid chain; its full sequence is Holliday junction branch migration complex subunit RuvA (203 aa).

The segment at 1–63 (MIGKLSGKID…EEHIHLYGFL (63 aa)) is domain I. Residues 64 to 142 (TIEEKNFFNL…KISTGAAIIN (79 aa)) form a domain II region. Residues 143–149 (DSLNIKN) are flexible linker. Residues 150–203 (ITSVASNEVIKALVNLGFSRFEAQNSVQGIVIQNPEISIDELIKTALKNRNAGL) are domain III.

It belongs to the RuvA family. As to quaternary structure, homotetramer. Forms an RuvA(8)-RuvB(12)-Holliday junction (HJ) complex. HJ DNA is sandwiched between 2 RuvA tetramers; dsDNA enters through RuvA and exits via RuvB. An RuvB hexamer assembles on each DNA strand where it exits the tetramer. Each RuvB hexamer is contacted by two RuvA subunits (via domain III) on 2 adjacent RuvB subunits; this complex drives branch migration. In the full resolvosome a probable DNA-RuvA(4)-RuvB(12)-RuvC(2) complex forms which resolves the HJ.

It is found in the cytoplasm. In terms of biological role, the RuvA-RuvB-RuvC complex processes Holliday junction (HJ) DNA during genetic recombination and DNA repair, while the RuvA-RuvB complex plays an important role in the rescue of blocked DNA replication forks via replication fork reversal (RFR). RuvA specifically binds to HJ cruciform DNA, conferring on it an open structure. The RuvB hexamer acts as an ATP-dependent pump, pulling dsDNA into and through the RuvAB complex. HJ branch migration allows RuvC to scan DNA until it finds its consensus sequence, where it cleaves and resolves the cruciform DNA. The polypeptide is Holliday junction branch migration complex subunit RuvA (Rickettsia akari (strain Hartford)).